A 598-amino-acid chain; its full sequence is Probable pectinesterase/pectinesterase inhibitor 34 (598 aa).

Positions 1–40 (MGYERLGPSGATGSVTTSTTTAPILNQVSTSEQPENNNRR) are disordered. Low complexity predominate over residues 7–23 (GPSGATGSVTTSTTTAP). The segment covering 24–36 (ILNQVSTSEQPEN) has biased composition (polar residues). Residues 46-66 (VVSSIVLAISLILAAAIFAGV) form a helical membrane-spanning segment. The segment at 81-232 (RKPSQAISKA…SELVSNCLAI (152 aa)) is pectinesterase inhibitor 34. Residues 284–582 (DIIVSKDGNG…FTVAEFIYGS (299 aa)) form a pectinesterase 34 region. The substrate site is built by threonine 360 and glutamine 390. Aspartate 413 functions as the Proton donor; for pectinesterase activity in the catalytic mechanism. Cysteine 427 and cysteine 447 are joined by a disulfide. Aspartate 434 functions as the Nucleophile; for pectinesterase activity in the catalytic mechanism. Positions 502 and 504 each coordinate substrate.

This sequence in the N-terminal section; belongs to the PMEI family. It in the C-terminal section; belongs to the pectinesterase family. In terms of tissue distribution, expressed in siliques.

Its subcellular location is the membrane. It carries out the reaction [(1-&gt;4)-alpha-D-galacturonosyl methyl ester](n) + n H2O = [(1-&gt;4)-alpha-D-galacturonosyl](n) + n methanol + n H(+). It participates in glycan metabolism; pectin degradation; 2-dehydro-3-deoxy-D-gluconate from pectin: step 1/5. Functionally, acts in the modification of cell walls via demethylesterification of cell wall pectin. The sequence is that of Probable pectinesterase/pectinesterase inhibitor 34 (PME34) from Arabidopsis thaliana (Mouse-ear cress).